The chain runs to 241 residues: E3 ubiquitin-protein ligase RNF166 (241 aa).

The disordered stretch occupies residues 8–30 (VASSQHRQHHSHQSLATPSSADS). An RING-type zinc finger spans residues 37-77 (CPICLEVYYKPVAIGSCGHTFCGECLQPCLQVSSPLCPLCR). Positions 102, 105, 117, and 121 each coordinate Zn(2+). The C2HC RNF-type zinc-finger motif lies at 102 to 121 (CRGCSKKVTLAKMRAHISSC). One can recognise a UIM domain in the interval 225-241 (DEEAALQAALALSLSEN).

The protein localises to the cytoplasm. It carries out the reaction S-ubiquitinyl-[E2 ubiquitin-conjugating enzyme]-L-cysteine + [acceptor protein]-L-lysine = [E2 ubiquitin-conjugating enzyme]-L-cysteine + N(6)-ubiquitinyl-[acceptor protein]-L-lysine.. Its pathway is protein modification; protein ubiquitination. E3 ubiquitin-protein ligase that promotes the ubiquitination of different substrates. The chain is E3 ubiquitin-protein ligase RNF166 (rnf166) from Xenopus laevis (African clawed frog).